The chain runs to 505 residues: MKNEKKKSGIEPKVFFPPLIIVGILCWLTVRDLDAANVVINAVFSYVTNVWGWAFEWYMVVMLFGWFWLVFGPYAKKRLGDEKPEFSTASWIFMMFASCTSAAVLFWGSIEIYYYISTPPFGLEPNSTGAKEIGLAYSLFHWGPLPWATYSFLSVAFAYFFFVRKMDVIRPSSTLVPLVGEKHAKGLFGTIVDNFYLVALIFAMGTSLGLATPLVTECMQWLFGIPHTLQLDAIIITCWIILNAICVACGLQKGVRIASDVRSYLSFLMLGWVFIVSGASFIMNYFTDSVGMLLMHLPRMLFYTDAIGKGGFPQGWTVFYWAWWVIYAIQMSIFLARISRGRTVRELCFGMVMGLTASTWILWTVLGSNTLLLMDKNILNIPQLIEQHGVARAIIETWAALPLSTATMWGFFILCFIATVTLINACSYTLAMSTCREVRDGEEPPLLVRIGWSVLVGIIGIVLLALGGLKPIQTAIIAGGCPLFFINIMVTLSFIKDAKVHWKDK.

12 helical membrane-spanning segments follow: residues isoleucine 10–valine 30, tryptophan 51–phenylalanine 71, isoleucine 92–isoleucine 112, glycine 143–valine 163, phenylalanine 195–valine 215, leucine 231–leucine 251, serine 263–methionine 283, tryptophan 316–alanine 336, leucine 347–glycine 367, leucine 403–isoleucine 423, leucine 446–leucine 466, and alanine 475–isoleucine 495.

This sequence belongs to the BCCT transporter (TC 2.A.15) family. CaiT subfamily. In terms of assembly, homotrimer.

The protein localises to the cell inner membrane. The enzyme catalyses 4-(trimethylamino)butanoate(in) + (R)-carnitine(out) = 4-(trimethylamino)butanoate(out) + (R)-carnitine(in). It functions in the pathway amine and polyamine metabolism; carnitine metabolism. In terms of biological role, catalyzes the exchange of L-carnitine for gamma-butyrobetaine. This is L-carnitine/gamma-butyrobetaine antiporter from Salmonella choleraesuis (strain SC-B67).